We begin with the raw amino-acid sequence, 459 residues long: MIKDPFARLGLDREVLTVSQLNGRARVLLEDVFSSIWVEGEISNLSRPASGHVYFTLKDSGAQVRCALFRQSAARVRQALKDGLQVKVRGKVSLFEGRGDYQLILDTVEPAGDGALRLAFDALKAKLSDEGLFSADRKVALPLHPQRIGIISSPTGAVIRDIISVFRRRAPRVELTLIPTAVQGREAINQIVRALKLADARGFDALILARGGGSLEDLWCFNEEAVARAIDACVTPIVSAVGHETDVSISDFVADVRAPTPSAAAELLAPDSSDLHRRVDNLHRRLVSRMQDRLMRERLRLEGISRRLRHPGERLRQQSQRLDDLDMRLRRAFEQSMHKKQVRLAHMESRLTAQHPGRTLAFLRQRLDALAERLPRAIREQIKVRKLQLQSQMQTLNVVSPLATLGRGYSILLDERGHAIRNAAQTQPGQRLTARLGEGELQVRVEDNHLTPVTLSLLD.

The protein belongs to the XseA family. Heterooligomer composed of large and small subunits.

It localises to the cytoplasm. It catalyses the reaction Exonucleolytic cleavage in either 5'- to 3'- or 3'- to 5'-direction to yield nucleoside 5'-phosphates.. Bidirectionally degrades single-stranded DNA into large acid-insoluble oligonucleotides, which are then degraded further into small acid-soluble oligonucleotides. The polypeptide is Exodeoxyribonuclease 7 large subunit (Pseudomonas syringae pv. tomato (strain ATCC BAA-871 / DC3000)).